A 285-amino-acid polypeptide reads, in one-letter code: Homeobox protein Hox-A13b (285 aa).

Residues 219–278 constitute a DNA-binding region (homeobox); sequence GRKKRVPYTKVQLKELEREYAANKFITKDKRRRISAQTNLTERQVTIWFQNRRVKEKKVV.

Belongs to the Abd-B homeobox family.

The protein resides in the nucleus. Functionally, sequence-specific transcription factor which is part of a developmental regulatory system that provides cells with specific positional identities on the anterior-posterior axis. The protein is Homeobox protein Hox-A13b (hoxa13b) of Takifugu rubripes (Japanese pufferfish).